The following is a 246-amino-acid chain: Metallo-beta-lactamase type 2 (246 aa).

The first 20 residues, 1-20, serve as a signal peptide directing secretion; it reads MKKLFVLCVCFFCSITAAGA. Residues His95, His97, Asp99, His157, and Cys176 each contribute to the Zn(2+) site. Residue Asp99 participates in a beta-lactam binding. Positions 179 and 185 each coordinate a beta-lactam. His215 is a binding site for Zn(2+).

Belongs to the metallo-beta-lactamase superfamily. Class-B beta-lactamase family. As to quaternary structure, monomer. It depends on Zn(2+) as a cofactor.

Its subcellular location is the periplasm. It carries out the reaction a beta-lactam + H2O = a substituted beta-amino acid. Its function is as follows. Confers resistance to the different beta-lactam antibiotics (penicillin, cephalosporin and carbapenem) via the hydrolysis of the beta-lactam ring. Exhibits higher catalytic efficiency toward ticarcillin and piperacillin than blaIMP-1. Exhibits catalytic activity for carbapenem compounds, but has a preference for imipenem and ertapenem over meropenem. Has high efficiency for the hydrolysis of cefuroxime. Exhibits hydrolysis of all cephalosporins tested. Exhibits no hydrolysis of temocillin, the 6-alpha-methoxy semisynthetic derivative of ticarcillin. The polypeptide is Metallo-beta-lactamase type 2 (Pseudomonas aeruginosa).